The chain runs to 209 residues: Large ribosomal subunit protein uL3 (209 aa).

Residues 113 to 155 (TSRGHGYQGNIKRHHQSRGPETHGSRYHRIPGSMGSIINRVPK) are disordered.

It belongs to the universal ribosomal protein uL3 family. As to quaternary structure, part of the 50S ribosomal subunit. Forms a cluster with proteins L14 and L19.

In terms of biological role, one of the primary rRNA binding proteins, it binds directly near the 3'-end of the 23S rRNA, where it nucleates assembly of the 50S subunit. The protein is Large ribosomal subunit protein uL3 of Lactobacillus delbrueckii subsp. bulgaricus (strain ATCC 11842 / DSM 20081 / BCRC 10696 / JCM 1002 / NBRC 13953 / NCIMB 11778 / NCTC 12712 / WDCM 00102 / Lb 14).